Reading from the N-terminus, the 359-residue chain is Mannose-1-phosphate guanylyltransferase catalytic subunit beta (359 aa).

Residues 2–221 (KALILVGGFG…EGFWMDVGQP (220 aa)) form a substrate-binding domain region. GDP-alpha-D-mannose is bound at residue aspartate 109. Aspartate 109 provides a ligand contact to Mg(2+). Residue lysine 161 is part of the active site. Aspartate 217 serves as a coordination point for GDP-alpha-D-mannose. Aspartate 217 lines the Mg(2+) pocket. Positions 244-359 (ATGNGIIGPV…SSIPEPEIIM (116 aa)) are hexapeptide repeat domain.

The protein belongs to the transferase hexapeptide repeat family. Component of the GMPPA-GMPPB mannose-1-phosphate guanylyltransferase complex composed of 4 GMPPA subunits and 8 gmppB subunits; the complex is organized into three layers, a central layer made up of 2 gmppA dimers sandwiched between two layers each made up of 2 gmppB dimers. gmppB catalytic activity is reduced when part of the complex and binding of GDP-alpha-D-Mannose by gmppA induces allosteric feedback inhibition of gmppB. Mg(2+) is required as a cofactor.

It catalyses the reaction alpha-D-mannose 1-phosphate + GTP + H(+) = GDP-alpha-D-mannose + diphosphate. It functions in the pathway nucleotide-sugar biosynthesis; GDP-alpha-D-mannose biosynthesis; GDP-alpha-D-mannose from alpha-D-mannose 1-phosphate (GTP route): step 1/1. Its activity is regulated as follows. Enzyme activity is reduced by incorporation into the GMPPA-GMPPB mannose-1-phosphate guanylyltransferase complex. Allosterically inhibited, when part of the GMPPA-GMPPB complex, by GDP-alpha-D-mannose binding to GMPPA. Functionally, catalytic subunit of the GMPPA-GMPPB mannose-1-phosphate guanylyltransferase complex. Catalyzes the formation of GDP-mannose, an essential precursor of glycan moieties of glycoproteins and glycolipids. Can catalyze the reverse reaction in vitro. Together with GMPPA regulates GDP-alpha-D-mannose levels. The chain is Mannose-1-phosphate guanylyltransferase catalytic subunit beta (gmppB) from Dictyostelium discoideum (Social amoeba).